Here is a 260-residue protein sequence, read N- to C-terminus: Acetylglutamate kinase (260 aa).

Substrate is bound by residues 46–47 (GG), Arg68, and Asn160.

Belongs to the acetylglutamate kinase family. ArgB subfamily.

The protein resides in the cytoplasm. It catalyses the reaction N-acetyl-L-glutamate + ATP = N-acetyl-L-glutamyl 5-phosphate + ADP. The protein operates within amino-acid biosynthesis; L-arginine biosynthesis; N(2)-acetyl-L-ornithine from L-glutamate: step 2/4. Functionally, catalyzes the ATP-dependent phosphorylation of N-acetyl-L-glutamate. The protein is Acetylglutamate kinase of Shewanella oneidensis (strain ATCC 700550 / JCM 31522 / CIP 106686 / LMG 19005 / NCIMB 14063 / MR-1).